Here is a 409-residue protein sequence, read N- to C-terminus: MNKPENFEEAIEIKRDPEDFSVEEIADIEPDPNGKYTIIKARVRDWDTNRIAAEIARRLHMSRKRVTFAGTKDKRAVKLQYFCINSADVDVASLSGIKDFEVIESFKSSHYLTLGDLIANHFKIRFYGIDPEMFRERYVHIISKGGFPNFFGDQRFGSRRRNTHEIGKLIIKGEYEEAVKKYIYDEKYDKESYRKHFIDTLDYKTALERFPHSLSFERSLIGYYARNGTFKGAFDSLPKNLTIMFVHAYQSYLFNRILDERLKIYGLNAVLPGDIAFPVDAYFNPDKSKPIEVNSYNREKISKLVSSDKIRISLPIFGYKTWIDNSDFGDVEYGILKEEGISQDDFKNKDFAYLSSSGDRRIISAKPINFSLENNVVEFTLGKGIYATVFLSSIGRLKENVYSDSEAEL.

The active-site Nucleophile is D73. The TRUD domain maps to 146-365 (GFPNFFGDQR…SSGDRRIISA (220 aa)).

It belongs to the pseudouridine synthase TruD family.

It catalyses the reaction uridine(13) in tRNA = pseudouridine(13) in tRNA. Could be responsible for synthesis of pseudouridine from uracil-13 in transfer RNAs. The polypeptide is Probable tRNA pseudouridine synthase D (Thermoplasma volcanium (strain ATCC 51530 / DSM 4299 / JCM 9571 / NBRC 15438 / GSS1)).